A 1362-amino-acid chain; its full sequence is Bromodomain-containing protein 4 (1362 aa).

The segment at Met1–Arg58 is disordered. The span at Thr23–Thr43 shows a compositional bias: low complexity. Residues Arg58–Leu164 enclose the Bromo 1 domain. Residue Lys99 forms a Glycyl lysine isopeptide (Lys-Gly) (interchain with G-Cter in SUMO2) linkage. 3 disordered regions span residues Val174–Thr229, Val242–Glu352, and Glu463–Lys615. Over residues Pro197–Pro211 the composition is skewed to low complexity. Composition is skewed to pro residues over residues Gln212 to Ala227 and Pro243 to Gln266. Positions Gln320 to Pro336 are enriched in basic and acidic residues. A Bromo 2 domain is found at Ser348–Met457. Ser470 is modified (phosphoserine). A compositionally biased stretch (low complexity) spans Lys478–Asp497. 7 positions are modified to phosphoserine; by CK2: Ser484, Ser488, Ser492, Ser494, Ser498, Ser499, and Ser503. Residues Ser484–Ser503 are NPS region. The interval Gln524 to Ser579 is BID region. A compositionally biased stretch (basic residues) spans Lys535–Arg553. The span at Lys554 to Pro570 shows a compositional bias: basic and acidic residues. Residue Lys585 forms a Glycyl lysine isopeptide (Lys-Gly) (interchain with G-Cter in SUMO2) linkage. In terms of domain architecture, NET spans Glu600–Gln682. Ser601 is modified (phosphoserine). The segment covering Asp605–Lys615 has biased composition (basic and acidic residues). Residues Lys645 and Lys694 each participate in a glycyl lysine isopeptide (Lys-Gly) (interchain with G-Cter in SUMO2) cross-link. The interval Cys674–Ser1100 is disordered. Over residues Ser699 to Ser712 the composition is skewed to low complexity. The span at Lys724–Gln744 shows a compositional bias: basic residues. 3 stretches are compositionally biased toward pro residues: residues Ala751 to Met785, Pro833 to Ser846, and Pro881 to Val890. A compositionally biased stretch (low complexity) spans Met926–Gln936. Pro residues-rich tracts occupy residues Gln953–Pro964, Gln973–Pro996, and Gln1010–Ala1034. The span at Gln1041–Lys1050 shows a compositional bias: basic residues. Positions Arg1047 to Phe1362 are C-terminal (CTD) region. Lys1050 participates in a covalent cross-link: Glycyl lysine isopeptide (Lys-Gly) (interchain with G-Cter in SUMO2). Residues Pro1071–Pro1091 are compositionally biased toward polar residues. Lys1111 carries the N6-acetyllysine; alternate modification. Lys1111 participates in a covalent cross-link: Glycyl lysine isopeptide (Lys-Gly) (interchain with G-Cter in SUMO1); alternate. Residue Lys1111 forms a Glycyl lysine isopeptide (Lys-Gly) (interchain with G-Cter in SUMO2); alternate linkage. The segment at His1116–Glu1339 is disordered. Ser1117 and Ser1126 each carry phosphoserine. Residues Pro1175–Ile1196 show a composition bias toward basic and acidic residues. A Glycyl lysine isopeptide (Lys-Gly) (interchain with G-Cter in SUMO2) cross-link involves residue Lys1197. 2 positions are modified to phosphoserine: Ser1201 and Ser1204. Residues Thr1211–Ser1223 show a composition bias toward low complexity. Over residues Glu1225–Glu1284 the composition is skewed to basic and acidic residues. Over residues Gln1285 to Gln1313 the composition is skewed to low complexity. The span at Gln1323 to Glu1339 shows a compositional bias: basic and acidic residues.

The protein belongs to the BET family. As to quaternary structure, interacts with p53/TP53; the interaction is direct. Interacts (via CTD region) with CDK9 and CCNT1, acting as an associated component of P-TEFb complex. Interacts with RELA (when acetylated at 'Lys-310'). Interacts (via NET domain) with NSD3, CHD4, BICRA and ATAD5. The interaction with BICRA bridges BRD4 to the GBAF complex. Interacts (via NET domain) with JMJD6 (via JmjC and N-terminal domains); the interaction is stronger in presence of ssRNA and recruits JMJD6 on distal enhancers. Interacts with NSD3. Interacts with NIPBL. Interacts with SMC2. Interacts with NCAPD3. In terms of assembly, (Microbial infection) Interacts with bovine papillomavirus type 1 regulatory protein E2. This interactions may serve for the tethering of viral genomes to host mitotic chromosomes allowing successful partitioning of the viral genome during cell division. As to quaternary structure, (Microbial infection) Interacts with Epstein-Barr virus (EBV) protein EBNA1; this interaction facilitates transcriptional activation by EBNA1. (Microbial infection) Interacts with human herpes virus-8 (HHV-8) protein LANA. Phosphorylation by CK2 disrupt the intramolecular binding between the bromo domain 2 and the NPS region and promotes binding between the NPS and the BID regions, leading to activate the protein and promote binding to acetylated histones. In absence of phosphorylation, BRD4 does not localize to p53/TP53 target gene promoters, phosphorylation promoting recruitment to p53/TP53 target promoters. Ubiquitously expressed.

It localises to the nucleus. It is found in the chromosome. With respect to regulation, inhibited by JQ1, a thieno-triazolo-1,4-diazepine derivative, which specifically inhibits members of the BET family (BRD2, BRD3 and BRD4). The first bromo domain is inhibited by GSK778 (iBET-BD1), which specifically inhibits the first bromo domain of members of the BET family (BRD2, BRD3 and BRD4). The second bromo domain is inhibited by ABBV-744, which specifically inhibits the second bromo domain of members of the BET family (BRD2, BRD3 and BRD4). The second bromo domain is inhibited by GSK046 (iBET-BD2), which specifically inhibits the second bromo domain of members of the BET family (BRD2, BRD3 and BRD4). Its function is as follows. Chromatin reader protein that recognizes and binds acetylated histones and plays a key role in transmission of epigenetic memory across cell divisions and transcription regulation. Remains associated with acetylated chromatin throughout the entire cell cycle and provides epigenetic memory for postmitotic G1 gene transcription by preserving acetylated chromatin status and maintaining high-order chromatin structure. During interphase, plays a key role in regulating the transcription of signal-inducible genes by associating with the P-TEFb complex and recruiting it to promoters. Also recruits P-TEFb complex to distal enhancers, so called anti-pause enhancers in collaboration with JMJD6. BRD4 and JMJD6 are required to form the transcriptionally active P-TEFb complex by displacing negative regulators such as HEXIM1 and 7SKsnRNA complex from P-TEFb, thereby transforming it into an active form that can then phosphorylate the C-terminal domain (CTD) of RNA polymerase II. Regulates differentiation of naive CD4(+) T-cells into T-helper Th17 by promoting recruitment of P-TEFb to promoters. Promotes phosphorylation of 'Ser-2' of the C-terminal domain (CTD) of RNA polymerase II. According to a report, directly acts as an atypical protein kinase and mediates phosphorylation of 'Ser-2' of the C-terminal domain (CTD) of RNA polymerase II; these data however need additional evidences in vivo. In addition to acetylated histones, also recognizes and binds acetylated RELA, leading to further recruitment of the P-TEFb complex and subsequent activation of NF-kappa-B. Also acts as a regulator of p53/TP53-mediated transcription: following phosphorylation by CK2, recruited to p53/TP53 specific target promoters. Functionally, acts as a chromatin insulator in the DNA damage response pathway. Inhibits DNA damage response signaling by recruiting the condensin-2 complex to acetylated histones, leading to chromatin structure remodeling, insulating the region from DNA damage response by limiting spreading of histone H2AX/H2A.x phosphorylation. This is Bromodomain-containing protein 4 (BRD4) from Homo sapiens (Human).